Reading from the N-terminus, the 369-residue chain is WAT1-related protein At3g53210 (369 aa).

10 helical membrane-spanning segments follow: residues 12 to 31 (IAMV…MRYA), 39 to 59 (LVFP…SAYF), 72 to 92 (FLIQ…GFYI), 103 to 123 (ASAT…LLGI), 133 to 153 (GIAK…ITLY), 182 to 202 (WTLG…WIVL), 214 to 234 (FSFV…ISAY), 252 to 272 (ALLY…IYVV), 278 to 298 (LFVS…ATLA), and 303 to 323 (FYLG…LVVM). EamA domains follow at residues 24-150 (NHVI…SLVI) and 194-323 (LCWS…LVVM). Positions 348 to 369 (GDEEDYHNNKPRSPISQPLISS) are disordered.

The protein belongs to the drug/metabolite transporter (DMT) superfamily. Plant drug/metabolite exporter (P-DME) (TC 2.A.7.4) family.

It is found in the membrane. This Arabidopsis thaliana (Mouse-ear cress) protein is WAT1-related protein At3g53210.